A 409-amino-acid chain; its full sequence is WW domain-containing oxidoreductase (409 aa).

A disordered region spans residues 1–23 (MIALPDTDSEDELPPGWEERATD). 2 WW domains span residues 11–44 (DELP…HPRT) and 52–86 (GELP…DPRL). 128-134 (GANCGIG) is an NADP(+) binding site. Residue Ser257 participates in substrate binding. Catalysis depends on Tyr288, which acts as the Proton acceptor.

Belongs to the short-chain dehydrogenases/reductases (SDR) family.

It is found in the cytoplasm. The protein resides in the mitochondrion. It localises to the golgi apparatus. Its subcellular location is the lysosome. Putative oxidoreductase. May control genotoxic stress-induced cell death. May play a role in TGFB1 signaling and TGFB1-mediated cell death. May also play a role in tumor necrosis factor (TNF)-mediated cell death. May play a role in Wnt signaling. In Drosophila melanogaster (Fruit fly), this protein is WW domain-containing oxidoreductase (Wwox).